Reading from the N-terminus, the 270-residue chain is MLMYPHIDPIALQIGPLAIHWYGLTYLAAFGLFMFLGTRRLRHEPYASLTGAQAWTRKDVEDILFLGVLGVVVGGRLGYCLFYKPGYYLSHPLEIFYIWQGGMSFHGGLLGVIASMVWFARSRHRPWLQVADFVAPCVPTGLAAGRVGNFINGELWGRFCDPSLPWGMVFPQSGSMLPRHPSQVYQFLMEGLLLFVLLWLYARRERRQGEVAAAFLVGYGCFRFIAEYFREPDAFLGILSLGMSMGQWLCVPMIVAGVLLWVWARRQPAR.

3 helical membrane passes run 17-37, 63-83, and 95-115; these read LAIH…MFLG, ILFL…CLFY, and IFYI…VIAS. Residue R146 participates in a 1,2-diacyl-sn-glycero-3-phospho-(1'-sn-glycerol) binding. Helical transmembrane passes span 182-202, 209-229, and 243-263; these read SQVY…WLYA, GEVA…AEYF, and MSMG…LWVW.

This sequence belongs to the Lgt family.

Its subcellular location is the cell inner membrane. It carries out the reaction L-cysteinyl-[prolipoprotein] + a 1,2-diacyl-sn-glycero-3-phospho-(1'-sn-glycerol) = an S-1,2-diacyl-sn-glyceryl-L-cysteinyl-[prolipoprotein] + sn-glycerol 1-phosphate + H(+). It functions in the pathway protein modification; lipoprotein biosynthesis (diacylglyceryl transfer). Its function is as follows. Catalyzes the transfer of the diacylglyceryl group from phosphatidylglycerol to the sulfhydryl group of the N-terminal cysteine of a prolipoprotein, the first step in the formation of mature lipoproteins. The polypeptide is Phosphatidylglycerol--prolipoprotein diacylglyceryl transferase (Paracidovorax citrulli (strain AAC00-1) (Acidovorax citrulli)).